The following is a 330-amino-acid chain: 4-hydroxythreonine-4-phosphate dehydrogenase (330 aa).

Substrate is bound by residues His136 and Thr137. A divalent metal cation-binding residues include His166, His211, and His266. 3 residues coordinate substrate: Lys274, Asn283, and Arg292.

The protein belongs to the PdxA family. Homodimer. Zn(2+) serves as cofactor. The cofactor is Mg(2+). Co(2+) is required as a cofactor.

Its subcellular location is the cytoplasm. The enzyme catalyses 4-(phosphooxy)-L-threonine + NAD(+) = 3-amino-2-oxopropyl phosphate + CO2 + NADH. Its pathway is cofactor biosynthesis; pyridoxine 5'-phosphate biosynthesis; pyridoxine 5'-phosphate from D-erythrose 4-phosphate: step 4/5. Its function is as follows. Catalyzes the NAD(P)-dependent oxidation of 4-(phosphooxy)-L-threonine (HTP) into 2-amino-3-oxo-4-(phosphooxy)butyric acid which spontaneously decarboxylates to form 3-amino-2-oxopropyl phosphate (AHAP). In Serratia proteamaculans (strain 568), this protein is 4-hydroxythreonine-4-phosphate dehydrogenase.